A 663-amino-acid chain; its full sequence is Preterminal protein (663 aa).

A Nuclear localization signal motif is present at residues Ser-367–Arg-376. Residues Arg-374–Ser-414 form a disordered region. Positions Pro-380–Glu-390 are enriched in pro residues. Acidic residues predominate over residues Glu-400–Glu-409. Ser-575 is modified (O-(5'-phospho-DNA)-serine). The tract at residues Gln-632–Leu-663 is disordered.

It belongs to the adenoviridae terminal protein family. As to quaternary structure, heterodimer with the polymerase; this heterodimer binds to bp 9 to 18 of the genome. Interacts with host POU2F1; POU2F1 binds to the auxiliary sequences in the inverted terminal repeats and tethers the pTP-POL heterodimer to the origin DNA thereby participating in the assembly of the pre-initiation complex (POL-TP-DBP-NFIA-POU2F1). In terms of processing, preterminal protein is used to replicate viral genome, upon genomic encapsidation it is processed first into iTP and finally into TP by adenovirus protease.

The protein localises to the host nucleus matrix. Functionally, protein covalently bound to the viral DNA that acts as a primer for viral genomic replication by DNA strand displacement. Assembles on the viral origin of replication in an initiation complex with viral polymerase, DBP, host NFIA and host POU2F1/OCT1. During initiation, the polymerase covalently couples the first dCTP with Ser-580 of pTP. The terminal protein stimulates the template activity over 20 fold compared to protein-free templates. Neo-synthesized viral genomes are linked to two preterminal proteins, one for each 5' end. These new genomes are encapsidated in the nucleus, and during capsid maturation by viral protease, preterminal protein is first cleaved into intermediary (iTP), then into mature TP. May play a role in host nuclear matrix localization of genomic DNA. The protein is Preterminal protein of Bos taurus (Bovine).